Consider the following 212-residue polypeptide: Pyridoxine/pyridoxamine 5'-phosphate oxidase (212 aa).

Substrate is bound by residues 8–11 (RREY) and Lys66. Residues 61-66 (RIVLLK), 76-77 (FT), Arg82, Lys83, and Gln105 contribute to the FMN site. Substrate-binding residues include Tyr123, Arg127, and Ser131. FMN contacts are provided by residues 140-141 (QS) and Trp185. 191 to 193 (RLH) provides a ligand contact to substrate. Arg195 is an FMN binding site.

The protein belongs to the pyridoxamine 5'-phosphate oxidase family. Homodimer. FMN is required as a cofactor.

The enzyme catalyses pyridoxamine 5'-phosphate + O2 + H2O = pyridoxal 5'-phosphate + H2O2 + NH4(+). The catalysed reaction is pyridoxine 5'-phosphate + O2 = pyridoxal 5'-phosphate + H2O2. Its pathway is cofactor metabolism; pyridoxal 5'-phosphate salvage; pyridoxal 5'-phosphate from pyridoxamine 5'-phosphate: step 1/1. The protein operates within cofactor metabolism; pyridoxal 5'-phosphate salvage; pyridoxal 5'-phosphate from pyridoxine 5'-phosphate: step 1/1. Catalyzes the oxidation of either pyridoxine 5'-phosphate (PNP) or pyridoxamine 5'-phosphate (PMP) into pyridoxal 5'-phosphate (PLP). The protein is Pyridoxine/pyridoxamine 5'-phosphate oxidase of Shewanella oneidensis (strain ATCC 700550 / JCM 31522 / CIP 106686 / LMG 19005 / NCIMB 14063 / MR-1).